The chain runs to 351 residues: Quinolinate phosphoribosyltransferase [decarboxylating] 2, mitochondrial (351 aa).

Substrate-binding positions include arginine 142, 173-175, arginine 197, lysine 207, glutamate 240, aspartate 267, 299-301, and 320-322; these read TRK, SGN, and SGA.

Belongs to the NadC/ModD family.

The protein resides in the mitochondrion. It carries out the reaction nicotinate beta-D-ribonucleotide + CO2 + diphosphate = quinolinate + 5-phospho-alpha-D-ribose 1-diphosphate + 2 H(+). The protein operates within alkaloid biosynthesis; nicotine biosynthesis. It functions in the pathway cofactor biosynthesis; NAD(+) biosynthesis; nicotinate D-ribonucleotide from quinolinate: step 1/1. Involved in the biosynthesis of pyridine alkaloid natural products, leading mainly to the production of anabasine, anatabine, nicotine and nornicotine, effective deterrents against herbivores with antiparasitic and pesticide properties (neurotoxins); nornicotine serves as the precursor in the synthesis of the carcinogen compound N'-nitrosonornicotine (NNN). Involved in the catabolism of quinolinic acid (QA). In Nicotiana glauca (Glaucous tobacco), this protein is Quinolinate phosphoribosyltransferase [decarboxylating] 2, mitochondrial.